The chain runs to 39 residues: uncharacterized protein (39 aa).

This is an uncharacterized protein from Saccharomyces cerevisiae (strain ATCC 204508 / S288c) (Baker's yeast).